Reading from the N-terminus, the 549-residue chain is Glucoamylase, intracellular sporulation-specific (549 aa).

Trp198 contributes to the substrate binding site. The active-site Proton acceptor is the Asp261. Residue Glu264 is the Proton donor of the active site.

The protein belongs to the glycosyl hydrolase 15 family.

The enzyme catalyses Hydrolysis of terminal (1-&gt;4)-linked alpha-D-glucose residues successively from non-reducing ends of the chains with release of beta-D-glucose.. In Saccharomyces cerevisiae (strain ATCC 204508 / S288c) (Baker's yeast), this protein is Glucoamylase, intracellular sporulation-specific (SGA1).